The chain runs to 789 residues: Isoamylase SU1, chloroplastic (789 aa).

Residues 1–44 constitute a chloroplast transit peptide; that stretch reads MAQQLPCVSSPRPLLAVPAGRWRAGVRGRPNVAGLGRGRLSLHA. Asp-417 acts as the Nucleophile in catalysis. Glu-473 (proton donor) is an active-site residue.

Belongs to the glycosyl hydrolase 13 family.

The protein localises to the plastid. It localises to the chloroplast. The catalysed reaction is Hydrolysis of (1-&gt;6)-alpha-D-glucosidic branch linkages in glycogen, amylopectin and their beta-limit dextrins.. It functions in the pathway glycan biosynthesis; starch biosynthesis. Functionally, isoamylase starch-debranching enzyme involved in amylopectin biosynthesis in endosperm. Functions by removing excess branches or improper branches that interfere with the formation of double helices of the cluster chains of amylopectin and crystallization of starch. This chain is Isoamylase SU1, chloroplastic, found in Zea mays (Maize).